The primary structure comprises 150 residues: UPF0178 protein Shewmr4_1560 (150 aa).

It belongs to the UPF0178 family.

In Shewanella sp. (strain MR-4), this protein is UPF0178 protein Shewmr4_1560.